We begin with the raw amino-acid sequence, 460 residues long: Alpha-1,3/1,6-mannosyltransferase ALG2 (460 aa).

Residues Asn41 and Asn389 are each glycosylated (N-linked (GlcNAc...) asparagine). A helical membrane pass occupies residues 439–459; sequence LGMWYSVLMTLTLSIVLLAIW.

Belongs to the glycosyltransferase group 1 family.

It localises to the endoplasmic reticulum membrane. It catalyses the reaction a beta-D-Man-(1-&gt;4)-beta-D-GlcNAc-(1-&gt;4)-alpha-D-GlcNAc-diphospho-di-trans,poly-cis-dolichol + GDP-alpha-D-mannose = an alpha-D-Man-(1-&gt;3)-beta-D-Man-(1-&gt;4)-beta-D-GlcNAc-(1-&gt;4)-alpha-D-GlcNAc-diphospho-di-trans,poly-cis-dolichol + GDP + H(+). The enzyme catalyses an alpha-D-Man-(1-&gt;3)-beta-D-Man-(1-&gt;4)-beta-D-GlcNAc-(1-&gt;4)-alpha-D-GlcNAc-diphospho-di-trans,poly-cis-dolichol + GDP-alpha-D-mannose = an alpha-D-Man-(1-&gt;3)-[alpha-D-Man-(1-&gt;6)]-beta-D-Man-(1-&gt;4)-beta-D-GlcNAc-(1-&gt;4)-alpha-D-GlcNAc-diphospho-di-trans,poly-cis-dolichol + GDP + H(+). It functions in the pathway protein modification; protein glycosylation. Its function is as follows. Mannosylates Man(2)GlcNAc(2)-dolichol diphosphate and Man(1)GlcNAc(2)-dolichol diphosphate to form Man(3)GlcNAc(2)-dolichol diphosphate. The sequence is that of Alpha-1,3/1,6-mannosyltransferase ALG2 (ALG2) from Yarrowia lipolytica (strain CLIB 122 / E 150) (Yeast).